A 265-amino-acid polypeptide reads, in one-letter code: Glutamate 5-kinase (265 aa).

Lys15 provides a ligand contact to ATP. Substrate-binding residues include Ser55, Asp142, and Asn158. Residues Ser178–Asp179 and Thr220–Lys226 contribute to the ATP site.

Belongs to the glutamate 5-kinase family.

It localises to the cytoplasm. It carries out the reaction L-glutamate + ATP = L-glutamyl 5-phosphate + ADP. The protein operates within amino-acid biosynthesis; L-proline biosynthesis; L-glutamate 5-semialdehyde from L-glutamate: step 1/2. Functionally, catalyzes the transfer of a phosphate group to glutamate to form L-glutamate 5-phosphate. In Lactiplantibacillus plantarum (strain ATCC BAA-793 / NCIMB 8826 / WCFS1) (Lactobacillus plantarum), this protein is Glutamate 5-kinase.